The chain runs to 176 residues: PRL-1 phosphatase (176 aa).

In terms of domain architecture, Tyrosine-protein phosphatase spans 13–166 (APALIEYKGM…YKPKARLKHK (154 aa)). C109 acts as the Phosphocysteine intermediate in catalysis. Residue C173 is modified to Cysteine methyl ester. The S-farnesyl cysteine moiety is linked to residue C173. A propeptide spans 174-176 (SVQ) (removed in mature form).

This sequence belongs to the protein-tyrosine phosphatase family. Homotrimer. Interacts with uex, possibly at the plasma membrane. Expressed in the adult head (at protein level). Expressed in neurons in the antennal lobe and V-glomeruli (at protein level). Expressed in dorsocentral neurons (at protein level).

Its subcellular location is the cytoplasm. It localises to the cell membrane. The protein localises to the apicolateral cell membrane. It is found in the cell projection. The protein resides in the axon. It catalyses the reaction O-phospho-L-tyrosyl-[protein] + H2O = L-tyrosyl-[protein] + phosphate. Functionally, probable phosphatase. Inhibits growth possibly by negatively regulating Src64B-induced growth. Regulates central nervous system circuit formation and stabilization of synapse-dense terminal arbors. In dorsocentral neurons, regulates synaptogenesis in terminal arbors via modulation of the insulin receptor pathway, likely upstream of Akt1, and via reduction of PtdIns(4,5)P2 (Phosphatidylinositol 4,5-bisphosphate) levels. In the nervous system, plays a protective role together with uex in response to olfactory carbon dioxide stimulation. The polypeptide is PRL-1 phosphatase (Drosophila melanogaster (Fruit fly)).